Reading from the N-terminus, the 203-residue chain is Secreted RxLR effector protein RXLR-C28 (203 aa).

The signal sequence occupies residues 1-24 (MKAVKLTAAVVVLFMAPYVPITSS). N-linked (GlcNAc...) asparagine glycosylation is present at Asn32. The short motif at 37–40 (RHLR) is the RxLR element. A glycan (N-linked (GlcNAc...) asparagine) is linked at Asn193.

The protein belongs to the RxLR effector family.

The protein resides in the secreted. The protein localises to the host cytoplasm. Its function is as follows. Secreted effector that does not suppress pattern-triggered immunity (PTI) in plant host. In Plasmopara halstedii (Downy mildew of sunflower), this protein is Secreted RxLR effector protein RXLR-C28.